Consider the following 340-residue polypeptide: MFMKTDDFDYKLPEELIASYPLENRDASRLLKLNKQTGEIADYKFTDFIDFINPGDLLVFNNSKVMLARLYGSKTTGAKLEYLIERIKNPKLFETHIKANRSPAIGSEIYVEDTLAKVLDKDGGMYLLEIQGDKDIYQLMEEFGHIPLPPYMKRDDEEFDAERYQTVYAQDLGSVAALTAGLHFSKELMQQIKDKGVDIAYITLHVGSGTFKPVQVDDVESHKMHAEVISVPVEVCQKIRQTKENGGRVITIGTTSVRSLETAGQNGQIEPYQGETDIFLYPGKKFNVVDAMITNFHLPKSTLIMLVSAFADKEKIIKAYEHAIAERYRFFSYGDAMFIF.

This sequence belongs to the QueA family. As to quaternary structure, monomer.

The protein localises to the cytoplasm. The catalysed reaction is 7-aminomethyl-7-carbaguanosine(34) in tRNA + S-adenosyl-L-methionine = epoxyqueuosine(34) in tRNA + adenine + L-methionine + 2 H(+). It functions in the pathway tRNA modification; tRNA-queuosine biosynthesis. Transfers and isomerizes the ribose moiety from AdoMet to the 7-aminomethyl group of 7-deazaguanine (preQ1-tRNA) to give epoxyqueuosine (oQ-tRNA). The polypeptide is S-adenosylmethionine:tRNA ribosyltransferase-isomerase (Francisella tularensis subsp. holarctica (strain OSU18)).